The following is a 111-amino-acid chain: uncharacterized protein (111 aa).

Residues 8–111 form the HIT domain; the sequence is LFLKIIKREE…HVHIIPYYKK (104 aa). The short motif at 100 to 104 is the Histidine triad motif element; the sequence is HTHVH.

This is an uncharacterized protein from Mesomycoplasma hyorhinis (Mycoplasma hyorhinis).